The primary structure comprises 635 residues: Sodium- and chloride-dependent transporter XTRP3B (635 aa).

Residues 1-38 (MESPSAHAVSLPEDEELQPWGGAGGPGQHPGRPRSTEC) are disordered. Residues 1–56 (MESPSAHAVSLPEDEELQPWGGAGGPGQHPGRPRSTECAHPGVVEKVRPKWDNPLQ) lie on the Cytoplasmic side of the membrane. The helical transmembrane segment at 57-77 (FLLVCISYAVGLGNVWRFPYL) threads the bilayer. The Extracellular portion of the chain corresponds to 78–85 (CQMYGGGN). The chain crosses the membrane as a helical span at residues 86-106 (FLVPYIIMLIVEGMPLLYLEL). Topologically, residues 107–127 (AVGQRMRQGSIGAWRTISPYL) are cytoplasmic. Residues 128-148 (SGVGIASLVVSFLASVYFNVI) traverse the membrane as a helical segment. At 149–208 (NTWALWYLFHSFQDPLPWSVCPLNSNHTGYDEECEKASSTQYFWYRKTLNISPSIQENGG) the chain is on the extracellular side. N174 carries an N-linked (GlcNAc...) asparagine glycan. Residues 209 to 229 (VQWEPALCLTLAWLMVYLCIL) form a helical membrane-spanning segment. The Cytoplasmic segment spans residues 230-237 (RGTESTGK). A helical membrane pass occupies residues 238 to 258 (VVYFTTSLPYFVLIIYLVRGL). The Extracellular segment spans residues 259 to 284 (TLHGATNGLAYMFTPKIEQLANPKAW). Residues 285-305 (INAATQIFFSLGLGCGGLIAF) form a helical membrane-spanning segment. The Cytoplasmic portion of the chain corresponds to 306 to 319 (ASYNEPSNDCQKHA). Residues 320 to 340 (LIVSVINSTTAIFSSIVTFSI) traverse the membrane as a helical segment. The Extracellular portion of the chain corresponds to 341 to 432 (YGFKATFNYE…EAIKNMEVSQ (92 aa)). An N-linked (GlcNAc...) asparagine glycan is attached at N400. Residues 433–453 (LWSVLYFFMLLTLGMGSMVGT) traverse the membrane as a helical segment. Residues 454–474 (GTAILTPLTDSKIISSYLPKE) lie on the Cytoplasmic side of the membrane. The helical transmembrane segment at 475–495 (AISGLVCLLNCAIGMVFTMEA) threads the bilayer. Residues 496–508 (GNYWFDLFNDYTA) lie on the Extracellular side of the membrane. Residues 509 to 529 (TLSLLLIVLVETIAVCYVYGL) form a helical membrane-spanning segment. Residues 530 to 547 (KRFESDLRAMTGRTLSWY) are Cytoplasmic-facing. A helical membrane pass occupies residues 548-568 (WKVMWAFVSPLLIVGLFIFYL). Residues 569-597 (SDYILTGTLQYQAWDATQGHVVTKDYPTY) are Extracellular-facing. Residues 598–618 (ALAVIGLLVASSTMCIPLVAL) traverse the membrane as a helical segment. Residues 619–635 (GTFVTRHFKIREQFSAA) are Cytoplasmic-facing.

It belongs to the sodium:neurotransmitter symporter (SNF) (TC 2.A.22) family. SLC6A20 subfamily. In terms of assembly, interacts with CLTRN. Detected only in kidney and lung.

Its subcellular location is the apical cell membrane. In terms of biological role, does not show transporter activity with a range of tested amino acids including proline, glutamine, glutamic acid, leucine, alanine, histidine, glycine and arginine. This chain is Sodium- and chloride-dependent transporter XTRP3B (Slc6a20b), found in Mus musculus (Mouse).